Here is a 205-residue protein sequence, read N- to C-terminus: N-(5'-phosphoribosyl)anthranilate isomerase (205 aa).

It belongs to the TrpF family.

The enzyme catalyses N-(5-phospho-beta-D-ribosyl)anthranilate = 1-(2-carboxyphenylamino)-1-deoxy-D-ribulose 5-phosphate. Its pathway is amino-acid biosynthesis; L-tryptophan biosynthesis; L-tryptophan from chorismate: step 3/5. This chain is N-(5'-phosphoribosyl)anthranilate isomerase, found in Clostridium acetobutylicum (strain ATCC 824 / DSM 792 / JCM 1419 / IAM 19013 / LMG 5710 / NBRC 13948 / NRRL B-527 / VKM B-1787 / 2291 / W).